Reading from the N-terminus, the 192-residue chain is Imidazoleglycerol-phosphate dehydratase (192 aa).

Belongs to the imidazoleglycerol-phosphate dehydratase family.

It is found in the cytoplasm. The enzyme catalyses D-erythro-1-(imidazol-4-yl)glycerol 3-phosphate = 3-(imidazol-4-yl)-2-oxopropyl phosphate + H2O. It participates in amino-acid biosynthesis; L-histidine biosynthesis; L-histidine from 5-phospho-alpha-D-ribose 1-diphosphate: step 6/9. The sequence is that of Imidazoleglycerol-phosphate dehydratase from Staphylococcus epidermidis (strain ATCC 12228 / FDA PCI 1200).